A 255-amino-acid chain; its full sequence is Proteasome subunit alpha (255 aa).

Over residues proline 190–threonine 201 the composition is skewed to polar residues. The disordered stretch occupies residues proline 190 to asparagine 255. A compositionally biased stretch (basic and acidic residues) spans glutamate 202 to glycine 217.

This sequence belongs to the peptidase T1A family. The 20S proteasome core is composed of 14 alpha and 14 beta subunits that assemble into four stacked heptameric rings, resulting in a barrel-shaped structure. The two inner rings, each composed of seven catalytic beta subunits, are sandwiched by two outer rings, each composed of seven alpha subunits. The catalytic chamber with the active sites is on the inside of the barrel. Has a gated structure, the ends of the cylinder being occluded by the N-termini of the alpha-subunits. Is capped by the proteasome-associated ATPase, ARC.

It localises to the cytoplasm. It functions in the pathway protein degradation; proteasomal Pup-dependent pathway. With respect to regulation, the formation of the proteasomal ATPase ARC-20S proteasome complex, likely via the docking of the C-termini of ARC into the intersubunit pockets in the alpha-rings, may trigger opening of the gate for substrate entry. Interconversion between the open-gate and close-gate conformations leads to a dynamic regulation of the 20S proteasome proteolysis activity. Functionally, component of the proteasome core, a large protease complex with broad specificity involved in protein degradation. The chain is Proteasome subunit alpha from Saccharomonospora viridis (strain ATCC 15386 / DSM 43017 / JCM 3036 / CCUG 5913 / NBRC 12207 / NCIMB 9602 / P101) (Thermoactinomyces viridis).